A 555-amino-acid chain; its full sequence is Glutamate--tRNA ligase (555 aa).

The 'HIGH' region signature appears at 100–110 (PNPSGPLHIGH).

It belongs to the class-I aminoacyl-tRNA synthetase family. Glutamate--tRNA ligase type 2 subfamily.

It is found in the cytoplasm. It carries out the reaction tRNA(Glu) + L-glutamate + ATP = L-glutamyl-tRNA(Glu) + AMP + diphosphate. Catalyzes the attachment of glutamate to tRNA(Glu) in a two-step reaction: glutamate is first activated by ATP to form Glu-AMP and then transferred to the acceptor end of tRNA(Glu). This Methanococcus maripaludis (strain DSM 14266 / JCM 13030 / NBRC 101832 / S2 / LL) protein is Glutamate--tRNA ligase.